We begin with the raw amino-acid sequence, 631 residues long: Probable potassium transport system protein Kup (631 aa).

A run of 12 helical transmembrane segments spans residues 17–37 (IGLL…SPLY), 56–76 (ILGV…FKYM), 109–129 (MMMV…SMIT), 147–167 (GLDH…FLIQ), 174–194 (IGVL…ALGV), 215–235 (FFII…LALT), 256–276 (WFIL…ALVL), 288–308 (LLAP…ATII), 346–366 (IYIG…VIGF), 378–398 (VAVT…MLML), 403–423 (PLLA…FFAA), and 428–448 (IFQG…LMTT).

This sequence belongs to the HAK/KUP transporter (TC 2.A.72) family.

Its subcellular location is the cell inner membrane. It catalyses the reaction K(+)(in) + H(+)(in) = K(+)(out) + H(+)(out). Transport of potassium into the cell. Likely operates as a K(+):H(+) symporter. The sequence is that of Probable potassium transport system protein Kup from Pseudomonas syringae pv. tomato (strain ATCC BAA-871 / DC3000).